Reading from the N-terminus, the 232-residue chain is MLKLTDITWLYHHLPMRFSLTVERGEQVAILGPSGAGKSTLLNLIAGFLTPASGALTIDGVDHTTTPPSRRPVSMLFQENNLFSHLTVAQNIGLGLNPGLKLNAVQQEKMHAIARQMGIDNLMARLPGELSGGQRQRVALARCLVREQPILLLDEPFSALDPALRQEMLTLVSTSCQQQKMTLLMVSHSVEDAARIATRSVVVADGRIAWQGMTNELLSGKASASALLGITG.

The 229-residue stretch at 2 to 230 folds into the ABC transporter domain; that stretch reads LKLTDITWLY…KASASALLGI (229 aa). 32–39 serves as a coordination point for ATP; sequence GPSGAGKS.

Belongs to the ABC transporter superfamily. Thiamine importer (TC 3.A.1.19.1) family. The complex is composed of two ATP-binding proteins (ThiQ), two transmembrane proteins (ThiP) and a solute-binding protein (ThiB).

It localises to the cell inner membrane. It carries out the reaction thiamine(out) + ATP + H2O = thiamine(in) + ADP + phosphate + H(+). In terms of biological role, part of the ABC transporter complex ThiBPQ involved in thiamine import. Responsible for energy coupling to the transport system. This Escherichia coli O157:H7 protein is Thiamine import ATP-binding protein ThiQ.